A 303-amino-acid chain; its full sequence is Small ribosomal subunit protein uS2 (303 aa).

The disordered stretch occupies residues 267 to 303 (AESLSMAEEPAPPSQRKGPASETAEPVAEPAVTESGS).

The protein belongs to the universal ribosomal protein uS2 family.

The protein is Small ribosomal subunit protein uS2 of Solibacter usitatus (strain Ellin6076).